A 1217-amino-acid polypeptide reads, in one-letter code: Myosin-5 (1217 aa).

Residues 1–11 (MAILKRGARNK) show a composition bias toward basic residues. The segment at 1–24 (MAILKRGARNKTHQEPAKRGGNNI) is disordered. The Myosin motor domain maps to 37–716 (VGVSDLTLLT…TLFALENMRD (680 aa)). Position 130–137 (130–137 (GESGAGKT)) interacts with ATP. Ser358 carries the post-translational modification Phosphoserine. An actin-binding region spans residues 405–487 (SIGILDIYGF…PGIFAAMNDS (83 aa)). 2 IQ domains span residues 720-740 (HNMA…RIDA) and 741-766 (AVKI…YGTS). A TH1 domain is found at 772-962 (KERRSMSLLG…TIFVRRGNPA (191 aa)). 3 disordered regions span residues 956–1102 (VRRG…NPSE), 1145–1174 (GAKA…AQTV), and 1197–1217 (NKMR…DDDW). Over residues 965-974 (KSKKKPRKKS) the composition is skewed to basic residues. Positions 976-987 (GMSAPTTQSSKT) are enriched in polar residues. Residues 994–1007 (SSNNQNTTVSQSLN) are compositionally biased toward low complexity. Residues 1025-1038 (PAPPPPGSKKPAPQ) are compositionally biased toward pro residues. A compositionally biased stretch (low complexity) spans 1050–1071 (PQAQMQTQTQIPASQSSATQSS). Residues 1072–1081 (IPPPPPPPPS) are compositionally biased toward pro residues. Positions 1083-1145 (TSEPQFEAAY…PTAYMVKHEG (63 aa)) constitute an SH3 domain. The segment covering 1162–1174 (IQNQSQPASAQTV) has biased composition (polar residues). Residues 1203-1217 (SDEEAAASSDNDDDW) show a composition bias toward acidic residues.

It belongs to the TRAFAC class myosin-kinesin ATPase superfamily. Myosin family. Phosphorylation of the TEDS site (Ser-358) is required for the polarization of the actin cytoskeleton. Phosphorylation probably activates the myosin-I ATPase activity.

The protein localises to the cytoplasm. The protein resides in the cytoskeleton. Its subcellular location is the actin patch. Its function is as follows. Type-I myosin implicated in the organization of the actin cytoskeleton. Required for proper actin cytoskeleton polarization. At the cell cortex, assembles in patch-like structures together with proteins from the actin-polymerizing machinery and promotes actin assembly. Functions as actin nucleation-promoting factor (NPF) for the Arp2/3 complex. In Candida glabrata (strain ATCC 2001 / BCRC 20586 / JCM 3761 / NBRC 0622 / NRRL Y-65 / CBS 138) (Yeast), this protein is Myosin-5 (MYO5).